The sequence spans 114 residues: Ribosome-binding factor A (114 aa).

Belongs to the RbfA family. In terms of assembly, monomer. Binds 30S ribosomal subunits, but not 50S ribosomal subunits or 70S ribosomes.

It localises to the cytoplasm. Its function is as follows. One of several proteins that assist in the late maturation steps of the functional core of the 30S ribosomal subunit. Associates with free 30S ribosomal subunits (but not with 30S subunits that are part of 70S ribosomes or polysomes). Required for efficient processing of 16S rRNA. May interact with the 5'-terminal helix region of 16S rRNA. The protein is Ribosome-binding factor A of Phytoplasma mali (strain AT).